Consider the following 252-residue polypeptide: Serine/threonine phosphatase stp (252 aa).

Basic and acidic residues predominate over residues 1–18 (MHAEFRTDRGRIRHHNED). The interval 1–23 (MHAEFRTDRGRIRHHNEDNGGVF) is disordered. The PPM-type phosphatase domain occupies 2 to 242 (HAEFRTDRGR…DNITVLLVER (241 aa)). Mn(2+)-binding residues include Asp36, Gly37, Asp194, and Asp233.

The protein belongs to the PP2C family. The cofactor is Mn(2+).

It is found in the cytoplasm. The protein localises to the membrane. It carries out the reaction O-phospho-L-seryl-[protein] + H2O = L-seryl-[protein] + phosphate. The enzyme catalyses O-phospho-L-threonyl-[protein] + H2O = L-threonyl-[protein] + phosphate. Its function is as follows. Protein phosphatase that dephosphorylates EF-Tu. This chain is Serine/threonine phosphatase stp (stp), found in Listeria welshimeri serovar 6b (strain ATCC 35897 / DSM 20650 / CCUG 15529 / CIP 8149 / NCTC 11857 / SLCC 5334 / V8).